We begin with the raw amino-acid sequence, 244 residues long: uncharacterized protein (244 aa).

The region spanning 12–80 (VALWRQIADR…QGRGTMIERK (69 aa)) is the HTH gntR-type domain. The segment at residues 40–59 (ETALAAEFGVNRHTVRSALA) is a DNA-binding region (H-T-H motif).

This is an uncharacterized protein from Rhizobium meliloti (strain 1021) (Ensifer meliloti).